Here is an 827-residue protein sequence, read N- to C-terminus: Periplasmic nitrate reductase (827 aa).

The segment at residues 1–32 (MTLSRRAFIKQTAAATAASAAGVVLPGVDALA) is a signal peptide (tat-type signal). One can recognise a 4Fe-4S Mo/W bis-MGD-type domain in the interval 37 to 93 (LTWSKAPCRFCGTGCGVSVGVKNGKVVATQGDPQAEVNRGLNCVKGYFLSKIMYGQD). 4 residues coordinate [4Fe-4S] cluster: Cys-44, Cys-47, Cys-51, and Cys-79. Mo-bis(molybdopterin guanine dinucleotide) is bound by residues Lys-81, Gln-148, Asn-173, Cys-177, 241 to 245 (STFEH), 260 to 262 (QSD), Met-371, Gln-375, Asn-481, 507 to 508 (SD), Lys-530, Asp-557, and 717 to 726 (TGRVLEHWHS). Trp-793 contributes to the substrate binding site. Mo-bis(molybdopterin guanine dinucleotide)-binding residues include Asn-801 and Lys-818.

It belongs to the prokaryotic molybdopterin-containing oxidoreductase family. NasA/NapA/NarB subfamily. In terms of assembly, component of the periplasmic nitrate reductase NapAB complex composed of NapA and NapB. [4Fe-4S] cluster is required as a cofactor. Mo-bis(molybdopterin guanine dinucleotide) serves as cofactor. In terms of processing, predicted to be exported by the Tat system. The position of the signal peptide cleavage has not been experimentally proven.

Its subcellular location is the periplasm. It carries out the reaction 2 Fe(II)-[cytochrome] + nitrate + 2 H(+) = 2 Fe(III)-[cytochrome] + nitrite + H2O. Catalytic subunit of the periplasmic nitrate reductase complex NapAB. Receives electrons from NapB and catalyzes the reduction of nitrate to nitrite. This chain is Periplasmic nitrate reductase, found in Paraburkholderia xenovorans (strain LB400).